The sequence spans 226 residues: PKHD-type hydroxylase HNE_2117 (226 aa).

Residues 78 to 178 form the Fe2OG dioxygenase domain; sequence TVLTPRFNRY…RLASFLWTQS (101 aa). Fe cation contacts are provided by His-96, Asp-98, and His-159. Position 169 (Arg-169) interacts with 2-oxoglutarate.

Requires Fe(2+) as cofactor. The cofactor is L-ascorbate.

This chain is PKHD-type hydroxylase HNE_2117, found in Hyphomonas neptunium (strain ATCC 15444).